The following is a 146-amino-acid chain: Ribosome-binding factor A (146 aa).

The interval 125–146 (RDLDADDDKTKDDRAKDDKDSE) is disordered.

The protein belongs to the RbfA family. As to quaternary structure, monomer. Binds 30S ribosomal subunits, but not 50S ribosomal subunits or 70S ribosomes.

It is found in the cytoplasm. Functionally, one of several proteins that assist in the late maturation steps of the functional core of the 30S ribosomal subunit. Associates with free 30S ribosomal subunits (but not with 30S subunits that are part of 70S ribosomes or polysomes). Required for efficient processing of 16S rRNA. May interact with the 5'-terminal helix region of 16S rRNA. The sequence is that of Ribosome-binding factor A from Mesorhizobium japonicum (strain LMG 29417 / CECT 9101 / MAFF 303099) (Mesorhizobium loti (strain MAFF 303099)).